A 786-amino-acid polypeptide reads, in one-letter code: DNA double-strand break repair Rad50 ATPase (786 aa).

Residues K13, 33–39, and Q138 contribute to the ATP site; that span reads NGSGKTT. Coiled coils occupy residues 194–249, 337–455, and 551–650; these read LKAE…LKSI, EKAK…RALE, and ALER…VKAL. Residues 366–459 enclose the Zinc-hook domain; that stretch reads EIAELQNKIN…KIRALEKYKG (94 aa). Residues C411 and C414 each coordinate Zn(2+).

This sequence belongs to the SMC family. RAD50 subfamily. Homodimer. Forms a heterotetramer composed of two Mre11 subunits and two Rad50 subunits. Zn(2+) serves as cofactor.

In terms of biological role, part of the Rad50/Mre11 complex, which is involved in the early steps of DNA double-strand break (DSB) repair. The complex may facilitate opening of the processed DNA ends to aid in the recruitment of HerA and NurA. Rad50 controls the balance between DNA end bridging and DNA resection via ATP-dependent structural rearrangements of the Rad50/Mre11 complex. This chain is DNA double-strand break repair Rad50 ATPase, found in Nanoarchaeum equitans (strain Kin4-M).